We begin with the raw amino-acid sequence, 242 residues long: Guanylate kinase (242 aa).

The 179-residue stretch at 22–200 (GLLIVMTGAS…AVRELQAVQR (179 aa)) folds into the Guanylate kinase-like domain. 29–36 (GASGVGKG) provides a ligand contact to ATP.

It belongs to the guanylate kinase family.

It is found in the cytoplasm. It carries out the reaction GMP + ATP = GDP + ADP. In terms of biological role, essential for recycling GMP and indirectly, cGMP. This is Guanylate kinase from Deinococcus geothermalis (strain DSM 11300 / CIP 105573 / AG-3a).